Here is a 177-residue protein sequence, read N- to C-terminus: Large ribosomal subunit protein uL6 (177 aa).

This sequence belongs to the universal ribosomal protein uL6 family. Part of the 50S ribosomal subunit.

This protein binds to the 23S rRNA, and is important in its secondary structure. It is located near the subunit interface in the base of the L7/L12 stalk, and near the tRNA binding site of the peptidyltransferase center. The sequence is that of Large ribosomal subunit protein uL6 from Rickettsia africae (strain ESF-5).